We begin with the raw amino-acid sequence, 205 residues long: Ribosome maturation factor RimP (205 aa).

It belongs to the RimP family.

It localises to the cytoplasm. Its function is as follows. Required for maturation of 30S ribosomal subunits. This Sinorhizobium fredii (strain NBRC 101917 / NGR234) protein is Ribosome maturation factor RimP.